A 455-amino-acid chain; its full sequence is 3-isopropylmalate dehydratase large subunit (455 aa).

Positions 337, 397, and 400 each coordinate [4Fe-4S] cluster.

It belongs to the aconitase/IPM isomerase family. LeuC type 1 subfamily. As to quaternary structure, heterodimer of LeuC and LeuD. [4Fe-4S] cluster serves as cofactor.

It carries out the reaction (2R,3S)-3-isopropylmalate = (2S)-2-isopropylmalate. Its pathway is amino-acid biosynthesis; L-leucine biosynthesis; L-leucine from 3-methyl-2-oxobutanoate: step 2/4. Catalyzes the isomerization between 2-isopropylmalate and 3-isopropylmalate, via the formation of 2-isopropylmaleate. The sequence is that of 3-isopropylmalate dehydratase large subunit from Leuconostoc citreum (strain KM20).